We begin with the raw amino-acid sequence, 221 residues long: CASP-like protein 4B1 (221 aa).

Positions 1-78 are disordered; sequence MAMQLHAASP…HDHHGGGGGG (78 aa). The Cytoplasmic segment spans residues 1–87; the sequence is MAMQLHAASP…GDEATQLLNG (87 aa). The segment covering 19–33 has biased composition (pro residues); that stretch reads SPPPPPPLSPHPEPA. Low complexity predominate over residues 50–62; it reads APVATATTPLTPG. The helical transmembrane segment at 88 to 108 threads the bilayer; that stretch reads IVLVLRAGAALLSFVAMALVA. The Extracellular segment spans residues 109 to 125; it reads SCRHGDWMDFLRYQEYR. Residues 126-146 form a helical membrane-spanning segment; that stretch reads YLLGVSVVAFVYSAAQALKNF. Residues 147–160 lie on the Cytoplasmic side of the membrane; it reads RRRRRGAADASFLD. The chain crosses the membrane as a helical span at residues 161–181; it reads FAGDQAVAYLLVTASAAALPI. Residues 182–196 lie on the Extracellular side of the membrane; it reads TIRMRSAVVNVFTDA. A helical membrane pass occupies residues 197–217; it reads IAASIALGFLAFAALALSAML. Residues 218–221 lie on the Cytoplasmic side of the membrane; that stretch reads SRHA.

Belongs to the Casparian strip membrane proteins (CASP) family. Homodimer and heterodimers.

The protein localises to the cell membrane. The sequence is that of CASP-like protein 4B1 from Hordeum vulgare subsp. vulgare (Domesticated barley).